The chain runs to 39 residues: Metallocarboxypeptidase inhibitor (39 aa).

Gln1 carries the pyrrolidone carboxylic acid modification. 3 cysteine pairs are disulfide-bonded: Cys8/Cys24, Cys12/Cys27, and Cys18/Cys34.

As to expression, highly concentrated in tubers. Closely related but distinct forms of MCPI are present in leaves, stems and buds.

Its function is as follows. May play a defensive role against insect attacks. Inhibits A.aegypti carboxypeptidase CPB1. The chain is Metallocarboxypeptidase inhibitor from Solanum tuberosum (Potato).